We begin with the raw amino-acid sequence, 248 residues long: GPN-loop GTPase PAB0955 (248 aa).

10–15 provides a ligand contact to GTP; it reads GSGKTT. The Gly-Pro-Asn (GPN)-loop; involved in dimer interface motif lies at 65 to 67; sequence GPN. GTP is bound by residues 165–168 and Ala-224; that span reads NKVD.

This sequence belongs to the GPN-loop GTPase family. As to quaternary structure, homodimer. Interacts with DNA topoisomerase VI subunit B (top6B), DNA primase DnaG and RF-C.

In terms of biological role, small GTPase that may be involved in genome maintenance. Has weak intrinsic GTPase activity but displays no ATPase activity. The sequence is that of GPN-loop GTPase PAB0955 from Pyrococcus abyssi (strain GE5 / Orsay).